Reading from the N-terminus, the 122-residue chain is MKEIIAIIRPNKINRTKEVLDALGFSSMTANAVFGRGRQKAIVGEVTFAIQNKDLREEEGSMRYIPKRMISLVVPDEDASLVVESIMKVNKTGQIGDGKIFVCPIEDAVRVRTKESGEDAIL.

The protein belongs to the P(II) protein family.

Could be involved in the regulation of nitrogen fixation. The protein is Nitrogen fixation nifHD region GlnB-like protein 2 (glnBB) of Methanobacterium ivanovii.